The chain runs to 306 residues: Agmatinase (306 aa).

Residues His-126, Asp-149, His-151, Asp-153, Asp-230, and Asp-232 each contribute to the Mn(2+) site.

This sequence belongs to the arginase family. Agmatinase subfamily. Requires Mn(2+) as cofactor.

It carries out the reaction agmatine + H2O = urea + putrescine. It participates in amine and polyamine biosynthesis; putrescine biosynthesis via agmatine pathway; putrescine from agmatine: step 1/1. In terms of biological role, catalyzes the formation of putrescine from agmatine. This Salmonella agona (strain SL483) protein is Agmatinase.